The chain runs to 355 residues: 4-dimethylallyltryptophan N-methyltransferase easF (355 aa).

This sequence belongs to the methyltransferase superfamily. Homodimer.

It carries out the reaction 4-(3-methylbut-2-enyl)-L-tryptophan + S-adenosyl-L-methionine = 4-(3-methylbut-2-enyl)-L-abrine + S-adenosyl-L-homocysteine + H(+). Its pathway is alkaloid biosynthesis; ergot alkaloid biosynthesis. In terms of biological role, 4-dimethylallyltryptophan N-methyltransferase; part of the gene cluster that mediates the biosynthesis of fungal ergot alkaloid. DmaW catalyzes the first step of ergot alkaloid biosynthesis by condensing dimethylallyl diphosphate (DMAP) and tryptophan to form 4-dimethylallyl-L-tryptophan. The second step is catalyzed by the methyltransferase easF that methylates 4-dimethylallyl-L-tryptophan in the presence of S-adenosyl-L-methionine, resulting in the formation of 4-dimethylallyl-L-abrine. The catalase easC and the FAD-dependent oxidoreductase easE then transform 4-dimethylallyl-L-abrine to chanoclavine-I which is further oxidized by easD in the presence of NAD(+), resulting in the formation of chanoclavine-I aldehyde. Agroclavine dehydrogenase easG then mediates the conversion of chanoclavine-I aldehyde to agroclavine via a non-enzymatic adduct reaction: the substrate is an iminium intermediate that is formed spontaneously from chanoclavine-I aldehyde in the presence of glutathione. Further conversion of agroclavine to paspalic acid is a two-step process involving oxidation of agroclavine to elymoclavine and of elymoclavine to paspalic acid, the second step being performed by the elymoclavine oxidase cloA. However, cloA does not encode a functional enzyme indicating that C.fusiformis terminates its ergot alkaloid pathway at elymoclavine. This Claviceps fusiformis (Ergot fungus) protein is 4-dimethylallyltryptophan N-methyltransferase easF.